The chain runs to 258 residues: Meiotic drive suppressor wtf20 (258 aa).

The interval 1-71 (MKNNYTSLKS…GPTEIANPNV (71 aa)) is disordered. The segment covering 19-30 (KTDHEIDLEKGL) has biased composition (basic and acidic residues). 3 helical membrane-spanning segments follow: residues 84-106 (IYFLLRLLISVLAVSVVFFTAWV), 121-140 (FSVTIGITCPILFIAIFYFY), and 196-216 (SASAFTFMAVSSILIFIAETV).

This sequence belongs to the WTF family. Homomer. Interacts with other proteins that exhibit high sequence similarity.

It is found in the spore membrane. The protein localises to the vacuole membrane. Acts as a suppressor component of the dual wtf meiotic drive system, and can suppress but not confer meiotic drive by compatible poisons. Wtf meiotic drive systems promote unequal transmission of alleles from the parental zygote to progeny spores by encoding a poison and an antidote from the same locus; the poison is trans-acting and forms toxic aggregates in all spores within an ascus, wherease the antidote is spore-specific and targets aggregates for degradation by the vacuole. Meiotic drive by wtf systems therefore lead to poisoning of all progeny that do not inherit the dual poison/antidote allele, or express a compatible antidote. The chain is Meiotic drive suppressor wtf20 from Schizosaccharomyces pombe (strain 972 / ATCC 24843) (Fission yeast).